We begin with the raw amino-acid sequence, 599 residues long: Calcium-dependent protein kinase 10 (599 aa).

A lipid anchor (N-myristoyl glycine) is attached at glycine 2. The interval 27–110 is disordered; it reads RQDGDDALPG…PRPRVPPVKR (84 aa). The span at 74–84 shows a compositional bias: polar residues; the sequence is VSTTDTASAEQ. A compositionally biased stretch (low complexity) spans 87 to 98; that stretch reads SKSSAGSDSGEA. The Protein kinase domain maps to 133-391; that stretch reads YSLGRKLGQG…AHEVLRHPWV (259 aa). Residues 139–147 and lysine 162 each bind ATP; that span reads LGQGQFGTT. Residue aspartate 257 is the Proton acceptor of the active site. The segment at 397–427 is autoinhibitory domain; sequence APDKPLDSAVLSRMKQFSAMNKLKKMALRVI. 4 EF-hand domains span residues 434-469, 470-505, 506-541, and 544-575; these read DEIAGLKEMFKMIDTDNSGQITFEELKVGLKKVGAN, LQESEIYALMQAADVDNSGTIDYGEFIAATLHMNKI, EREDHLFAAFQYFDKDGSGYITADELQLACEEFGLG, and QLEEMIREVDEDNDGRIDYNEFVAMMQKPTMG. Ca(2+) contacts are provided by aspartate 447, aspartate 449, serine 451, glutamine 453, glutamate 458, aspartate 483, aspartate 485, serine 487, threonine 489, glutamate 494, aspartate 519, aspartate 521, serine 523, tyrosine 525, glutamate 530, aspartate 553, aspartate 555, aspartate 557, arginine 559, and glutamate 564.

This sequence belongs to the protein kinase superfamily. Ser/Thr protein kinase family. CDPK subfamily. In terms of tissue distribution, expressed in roots.

It is found in the membrane. It carries out the reaction L-seryl-[protein] + ATP = O-phospho-L-seryl-[protein] + ADP + H(+). The enzyme catalyses L-threonyl-[protein] + ATP = O-phospho-L-threonyl-[protein] + ADP + H(+). Its activity is regulated as follows. Activated by calcium. Autophosphorylation may play an important role in the regulation of the kinase activity. Functionally, may play a role in signal transduction pathways that involve calcium as a second messenger. The protein is Calcium-dependent protein kinase 10 of Oryza sativa subsp. japonica (Rice).